Reading from the N-terminus, the 131-residue chain is Cystatin-like cysteine protease inhibitor EPIC3 (131 aa).

A signal peptide spans 1–20 (MAFTRSIALFAGLALAASSA). A glycan (N-linked (GlcNAc...) asparagine) is linked at Asn-33. The short motif at 71–75 (QTVAG) is the Secondary area of contact element.

It belongs to the cystatin family.

Its subcellular location is the secreted. In terms of biological role, secreted effector that interacts with and inhibits host apoplastic pathogenesis-related papain-like cysteine proteases. Inhibition of host proteases by a pathogen extracellular protease inhibitor forms a specific type of defense-counterdefense mechanism between plants and microbial pathogens. This chain is Cystatin-like cysteine protease inhibitor EPIC3, found in Phytophthora infestans (Potato late blight agent).